Here is a 304-residue protein sequence, read N- to C-terminus: Granaticin polyketide synthase bifunctional cyclase/dehydratase (304 aa).

The protein operates within antifungal biosynthesis; monensin biosynthesis. Functionally, is needed for correct cyclization of the oligoketide leading to isochromanequinone formation. The chain is Granaticin polyketide synthase bifunctional cyclase/dehydratase from Streptomyces virginiae (Streptomyces cinnamonensis).